Reading from the N-terminus, the 370-residue chain is Coiled-coil domain-containing protein 89 (370 aa).

The segment at 1–38 is disordered; the sequence is MPQEESAPRMDTPSSEEPLDKQNRKLEDQEEEMGFKEL. T12 carries the phosphothreonine modification. Basic and acidic residues predominate over residues 18 to 38; it reads PLDKQNRKLEDQEEEMGFKEL. Positions 19–346 form a coiled coil; it reads LDKQNRKLED…YDELRLQSEA (328 aa).

This sequence belongs to the CCDC89 family. In terms of assembly, interacts with HEY1.

It is found in the cytoplasm. The protein resides in the nucleus. This is Coiled-coil domain-containing protein 89 from Bos taurus (Bovine).